Reading from the N-terminus, the 460-residue chain is MKEIDKYAGKNILVLGLGRSGFAVSKLLLKLGARLTLNDKADLAADPKAKQLADLGVRVIGGSHPVDLFDQEKFDYLVKNPGIPYENPMVAKASEKGVPIITEPEVALSASESPYVCVTGSNGKTTTVMLTQQIMDHYLQKQGHHAHAVGNIGCPISEVVLNQAGPDDLLVVEMSSFQLMGVTDIEPKVAAIVDIYNNVHLDYHKTFDNYVDAKLNVGRFQKASDYFLANFDQKDILAREEKATKAKILTFSENDPVADFYIGQDYLMHGEEKMMKIADIKLPGIHNLQNSLVAIGISSLMGAGKDDIAAVLSTFTGAEHRLQYVTTLDGVKVYNDSKSTNIEAATVAIQSFKQPEVLLAGGLDRGFVFDSLVDLFKKHVKAIVTYGETRYLLADAARKAGIKTIVVVDNLHEGVKAASKLAEAGDVLLFSPACASWDQFKTFEERGEYFVKYVKELEEK.

120 to 126 contacts ATP; the sequence is GSNGKTT.

Belongs to the MurCDEF family.

The protein localises to the cytoplasm. It catalyses the reaction UDP-N-acetyl-alpha-D-muramoyl-L-alanine + D-glutamate + ATP = UDP-N-acetyl-alpha-D-muramoyl-L-alanyl-D-glutamate + ADP + phosphate + H(+). The protein operates within cell wall biogenesis; peptidoglycan biosynthesis. Functionally, cell wall formation. Catalyzes the addition of glutamate to the nucleotide precursor UDP-N-acetylmuramoyl-L-alanine (UMA). The protein is UDP-N-acetylmuramoylalanine--D-glutamate ligase of Lactobacillus delbrueckii subsp. bulgaricus (strain ATCC 11842 / DSM 20081 / BCRC 10696 / JCM 1002 / NBRC 13953 / NCIMB 11778 / NCTC 12712 / WDCM 00102 / Lb 14).